Consider the following 242-residue polypeptide: Type III pantothenate kinase (242 aa).

ATP is bound at residue 5-12 (DLGNTRLK). Substrate-binding positions include Y94 and 100 to 103 (GCDR). D102 serves as the catalytic Proton acceptor. T124 contacts ATP. T175 lines the substrate pocket.

This sequence belongs to the type III pantothenate kinase family. As to quaternary structure, homodimer. Requires NH4(+) as cofactor. K(+) serves as cofactor.

Its subcellular location is the cytoplasm. It carries out the reaction (R)-pantothenate + ATP = (R)-4'-phosphopantothenate + ADP + H(+). It functions in the pathway cofactor biosynthesis; coenzyme A biosynthesis; CoA from (R)-pantothenate: step 1/5. Its function is as follows. Catalyzes the phosphorylation of pantothenate (Pan), the first step in CoA biosynthesis. This is Type III pantothenate kinase from Psychrobacter cryohalolentis (strain ATCC BAA-1226 / DSM 17306 / VKM B-2378 / K5).